Reading from the N-terminus, the 367-residue chain is MGLKFELLKTSGNARRGRIYLPHGVVETPTFMPVGTNANVKLMTPKLLDEIGAQIILGNAFHLYLKPGLDVFRFHGGIHNFMNWQKPVLTDSGGFQVFSLREGRKITEDGVLIRSPLDGSKHMITPELSMEIQHAIGSDIVMAFDYCAEPGISHQDAVVALELTSLWAERSLKKLRSLSDQAIFGIVQGAFFKDLRLRSAKEITSMNFDGFAIGGLSVGEEYDITLDMTKFTAPLLPENKPRYFMGAGSPKLIVDLVDSGIDMFDSVLPTRVARHGQALTWKGKLNIRSAKYKFSKEPIDESCGCYTCKNFSRSYIRHLFDRGEVLGQILLTIHNLHFMMDLSKKIRESIENDTFQELRGEVLKYYA.

The Proton acceptor role is filled by D91. Residues 91-95 (DSGGF), D145, Q188, and G215 each bind substrate. Catalysis depends on D265, which acts as the Nucleophile. Residues 270 to 274 (TRVAR) form an RNA binding; important for wobble base 34 recognition region. The Zn(2+) site is built by C303, C305, C308, and H334.

It belongs to the queuine tRNA-ribosyltransferase family. In terms of assembly, homodimer. Within each dimer, one monomer is responsible for RNA recognition and catalysis, while the other monomer binds to the replacement base PreQ1. Requires Zn(2+) as cofactor.

The catalysed reaction is 7-aminomethyl-7-carbaguanine + guanosine(34) in tRNA = 7-aminomethyl-7-carbaguanosine(34) in tRNA + guanine. Its pathway is tRNA modification; tRNA-queuosine biosynthesis. Functionally, catalyzes the base-exchange of a guanine (G) residue with the queuine precursor 7-aminomethyl-7-deazaguanine (PreQ1) at position 34 (anticodon wobble position) in tRNAs with GU(N) anticodons (tRNA-Asp, -Asn, -His and -Tyr). Catalysis occurs through a double-displacement mechanism. The nucleophile active site attacks the C1' of nucleotide 34 to detach the guanine base from the RNA, forming a covalent enzyme-RNA intermediate. The proton acceptor active site deprotonates the incoming PreQ1, allowing a nucleophilic attack on the C1' of the ribose to form the product. After dissociation, two additional enzymatic reactions on the tRNA convert PreQ1 to queuine (Q), resulting in the hypermodified nucleoside queuosine (7-(((4,5-cis-dihydroxy-2-cyclopenten-1-yl)amino)methyl)-7-deazaguanosine). This Thermosipho africanus (strain TCF52B) protein is Queuine tRNA-ribosyltransferase.